Here is an 878-residue protein sequence, read N- to C-terminus: DNA mismatch repair protein MutS (878 aa).

ATP is bound at residue 626–633; the sequence is GPNMAGKS.

The protein belongs to the DNA mismatch repair MutS family.

Its function is as follows. This protein is involved in the repair of mismatches in DNA. It is possible that it carries out the mismatch recognition step. This protein has a weak ATPase activity. The chain is DNA mismatch repair protein MutS from Paracoccus denitrificans (strain Pd 1222).